The following is a 787-amino-acid chain: Integrin beta-3 (787 aa).

The signal sequence occupies residues 1–25; sequence MRTRRPGQLWATLLALGALAGVVVG. The Extracellular portion of the chain corresponds to 27–717; it reads SNICTTRGVN…EEPECPKGPD (691 aa). In terms of domain architecture, PSI spans 29-75; sequence ICTTRGVNSCQQCLAVSPVCAWCSDESLPQNSPRCNLKKNLLKDKCS. Cystine bridges form between Cys-30–Cys-48, Cys-38–Cys-460, Cys-41–Cys-63, Cys-51–Cys-74, Cys-202–Cys-209, Cys-257–Cys-298, Cys-399–Cys-411, Cys-431–Cys-458, Cys-462–Cys-482, Cys-473–Cys-485, Cys-487–Cys-496, Cys-498–Cys-528, Cys-511–Cys-526, Cys-520–Cys-531, Cys-533–Cys-546, Cys-548–Cys-569, Cys-553–Cys-567, Cys-561–Cys-572, and Cys-574–Cys-583. One can recognise a VWFA domain in the interval 134–376; sequence DYPVDIYYLM…QLIVDAYGKI (243 aa). Mg(2+)-binding residues include Ser-146 and Ser-148. Ca(2+)-binding residues include Ser-148, Asp-151, Asp-152, and Asp-183. Positions 202-209 are CX3CL1-binding; the sequence is CYTMKSTC. Positions 202 to 209 are involved in CX3CL1-, NRG1-, FGF1- and IGF1-binding; it reads CYTMKSTC. Positions 240, 242, 244, 245, and 276 each coordinate Ca(2+). Glu-245 lines the Mg(2+) pocket. The interval 292–312 is CX3CL1-binding; that stretch reads LPNDGRCHIGPDNHYSASTTM. 2 N-linked (GlcNAc...) asparagine glycosylation sites follow: Asn-345 and Asn-396. I-EGF domains lie at 462 to 497, 498 to 547, 548 to 584, and 585 to 624; these read CQAF…SMCE, CSEE…KYCE, CDDF…YYCN, and CTTR…DTCE. Residue Asn-477 is glycosylated (N-linked (GlcNAc...) asparagine). A glycan (N-linked (GlcNAc...) asparagine) is linked at Asn-584. Cystine bridges form between Cys-585–Cys-608, Cys-592–Cys-606, Cys-600–Cys-611, Cys-613–Cys-623, Cys-626–Cys-629, Cys-633–Cys-680, Cys-639–Cys-660, Cys-642–Cys-656, and Cys-688–Cys-712. A glycan (N-linked (GlcNAc...) asparagine) is linked at Asn-679. A helical membrane pass occupies residues 718–738; it reads ILVVLLSVMGAILLIGLATLL. Topologically, residues 739–787 are cytoplasmic; that stretch reads IWKLLITIHDRKEFAKFEEERARAKWDTANNPLYKEATSTFTNITYRGT. Thr-766 is subject to Phosphothreonine. Phosphotyrosine is present on Tyr-772. An LIR motif is present at residues 776 to 782; it reads TSTFTNI. Thr-778 carries the post-translational modification Phosphothreonine. A Phosphotyrosine modification is found at Tyr-784.

It belongs to the integrin beta chain family. As to quaternary structure, heterodimer of an alpha and a beta subunit. Beta-3 (ITGB3) associates with either alpha-IIB (ITGA2B) or alpha-V (ITGAV). Interacts with FLNB and COMP. Interacts with PDIA6 following platelet stimulation. Interacts with SYK; upon activation by ITGB3 promotes platelet adhesion. Interacts with MYO10. Interacts with DAB2. Interacts with FERMT2. Integrin ITGAV:ITGB3 interacts with FBLN5 (via N-terminus). Interacts with EMP2; regulates the levels of the heterodimer ITGA5:ITGB3 integrin expression on the plasma membrane. ITGAV:ITGB3 interacts with CCN3. ITGAV:ITGB3 and ITGA2B:ITGB3 interact with SELP (via C-type lectin domain); the interaction mediates cell-cell interaction and adhesion. ITGAV:ITGB3 interacts with AGRA2. ITGAV:ITGB3 is found in a ternary complex with CX3CR1 and CX3CL1. ITGAV:ITGB3 is found in a ternary complex with NRG1 and ERBB3. ITGAV:ITGB3 is found in a ternary complex with FGF1 and FGFR1. ITGAV:ITGB3 interacts with FGF2; it is likely that FGF2 can simultaneously bind ITGAV:ITGB3 and FGF receptors. ITGAV:ITGB3 binds to IL1B. ITGAV:ITGB3 is found in a ternary complex with IGF1 and IGF1R. ITGAV:ITGB3 interacts with IGF2. ITGAV:ITGB3 interacts with FBN1. ITGAV:ITGB3 interacts with CD9, CD81 and CD151 (via second extracellular domain). Interacts (via the allosteric site (site 2)) with CXCL12 in a CXCR4-independent manner. Interacts with MXRA8/DICAM; the interaction inhibits ITGAV:ITGB3 heterodimer formation. ITGAV:ITGB3 interacts with PTN. Forms a complex with PTPRZ1 and PTN that stimulates endothelial cell migration through ITGB3 Tyr-772 phosphorylation. ITGAV:ITGB3 interacts with SLC6A4. Interacts with SLC6A4 (via C-terminus); this interaction regulates SLC6A4 trafficking. ITGA2B:ITGB3 interacts with PPIA/CYPA; the interaction is ROS and PPIase activity-dependent and is increased in the presence of thrombin. Interacts with tensin TNS3; TNS3 also interacts with PEAK1, thus acting as an adapter molecule to bridge the association of PEAK1 with ITGB3. Interacts with TM4SF19. In terms of processing, phosphorylated on tyrosine residues in response to thrombin-induced platelet aggregation. Probably involved in outside-in signaling.

It is found in the cell membrane. The protein resides in the cell projection. It localises to the lamellipodium membrane. The protein localises to the cell junction. Its subcellular location is the focal adhesion. It is found in the postsynaptic cell membrane. The protein resides in the synapse. Functionally, integrin alpha-V/beta-3 (ITGAV:ITGB3) is a receptor for cytotactin, fibronectin, laminin, matrix metalloproteinase-2, osteopontin, osteomodulin, prothrombin, thrombospondin, vitronectin and von Willebrand factor. Integrin alpha-IIB/beta-3 (ITGA2B:ITGB3) is a receptor for fibronectin, fibrinogen, plasminogen, prothrombin, thrombospondin and vitronectin. Integrins alpha-IIB/beta-3 and alpha-V/beta-3 recognize the sequence R-G-D in a wide array of ligands. Integrin alpha-IIB/beta-3 recognizes the sequence H-H-L-G-G-G-A-K-Q-A-G-D-V in fibrinogen gamma chain. Following activation integrin alpha-IIB/beta-3 brings about platelet/platelet interaction through binding of soluble fibrinogen. This step leads to rapid platelet aggregation which physically plugs ruptured endothelial surfaces. Fibrinogen binding enhances SELP expression in activated platelets. ITGAV:ITGB3 binds to fractalkine (CX3CL1) and acts as its coreceptor in CX3CR1-dependent fractalkine signaling. ITGAV:ITGB3 binds to NRG1 (via EGF domain) and this binding is essential for NRG1-ERBB signaling. ITGAV:ITGB3 binds to FGF1 and this binding is essential for FGF1 signaling. ITGAV:ITGB3 binds to FGF2 and this binding is essential for FGF2 signaling. ITGAV:ITGB3 binds to IGF1 and this binding is essential for IGF1 signaling. ITGAV:ITGB3 binds to IGF2 and this binding is essential for IGF2 signaling. ITGAV:ITGB3 binds to IL1B and this binding is essential for IL1B signaling. ITGAV:ITGB3 binds to PLA2G2A via a site (site 2) which is distinct from the classical ligand-binding site (site 1) and this induces integrin conformational changes and enhanced ligand binding to site 1. ITGAV:ITGB3 acts as a receptor for fibrillin-1 (FBN1) and mediates R-G-D-dependent cell adhesion to FBN1. In brain, plays a role in synaptic transmission and plasticity. Involved in the regulation of the serotonin neurotransmission, is required to localize to specific compartments within the synapse the serotonin receptor SLC6A4 and for an appropriate reuptake of serotonin. Controls excitatory synaptic strength by regulating GRIA2-containing AMPAR endocytosis, which affects AMPAR abundance and composition. ITGAV:ITGB3 acts as a receptor for CD40LG. ITGAV:ITGB3 acts as a receptor for IBSP and promotes cell adhesion and migration to IBSP. In Rattus norvegicus (Rat), this protein is Integrin beta-3.